A 202-amino-acid polypeptide reads, in one-letter code: Urease accessory protein UreE (202 aa).

The interval 138 to 202 (RGAYHSHGGH…HGHHHGHKHD (65 aa)) is disordered. Positions 147-193 (HSHDHGHAAHDHGHAAHDHGHNHDHDHGHAHGHDHQHDHNCDHDHDH) are enriched in basic and acidic residues.

It belongs to the UreE family.

It is found in the cytoplasm. Involved in urease metallocenter assembly. Binds nickel. Probably functions as a nickel donor during metallocenter assembly. The polypeptide is Urease accessory protein UreE (Rhizobium etli (strain CIAT 652)).